The sequence spans 330 residues: Cobalamin biosynthesis protein CobD (330 aa).

4 helical membrane-spanning segments follow: residues 60–80, 153–173, 227–247, and 308–328; these read TLVI…PPIV, GIIA…LLGV, LGIV…WKIF, and IVLF…FVLT.

Belongs to the CobD/CbiB family.

Its subcellular location is the cell membrane. It participates in cofactor biosynthesis; adenosylcobalamin biosynthesis. Its function is as follows. Converts cobyric acid to cobinamide by the addition of aminopropanol on the F carboxylic group. This chain is Cobalamin biosynthesis protein CobD, found in Desulfotalea psychrophila (strain LSv54 / DSM 12343).